The chain runs to 236 residues: Small ribosomal subunit protein uS2c (236 aa).

Belongs to the universal ribosomal protein uS2 family.

The protein localises to the plastid. It is found in the chloroplast. This Nymphaea alba (White water-lily) protein is Small ribosomal subunit protein uS2c (rps2).